A 545-amino-acid chain; its full sequence is Inosine-5'-monophosphate dehydrogenase (545 aa).

CBS domains follow at residues methionine 138–threonine 194 and methionine 201–threonine 258. Residues aspartate 295 and glycine 347–glycine 349 contribute to the NAD(+) site. Residues glycine 349 and glycine 351 each coordinate K(+). Serine 352 is an IMP binding site. Cysteine 354 is a K(+) binding site. The active-site Thioimidate intermediate is cysteine 354. IMP is bound by residues aspartate 387 to glycine 389, glycine 410 to glycine 411, and tyrosine 434 to glycine 438. Arginine 455 serves as the catalytic Proton acceptor. An IMP-binding site is contributed by glutamate 470. K(+) contacts are provided by glutamate 524, serine 525, and histidine 526.

The protein belongs to the IMPDH/GMPR family. As to quaternary structure, homotetramer. The cofactor is K(+).

It carries out the reaction IMP + NAD(+) + H2O = XMP + NADH + H(+). It functions in the pathway purine metabolism; XMP biosynthesis via de novo pathway; XMP from IMP: step 1/1. Mycophenolic acid (MPA) is a non-competitive inhibitor that prevents formation of the closed enzyme conformation by binding to the same site as the amobile flap. In contrast, mizoribine monophosphate (MZP) is a competitive inhibitor that induces the closed conformation. MPA is a potent inhibitor of mammalian IMPDHs but a poor inhibitor of the bacterial enzymes. MZP is a more potent inhibitor of bacterial IMPDH. In terms of biological role, catalyzes the conversion of inosine 5'-phosphate (IMP) to xanthosine 5'-phosphate (XMP), the first committed and rate-limiting step in the de novo synthesis of guanine nucleotides, and therefore plays an important role in the regulation of cell growth. This chain is Inosine-5'-monophosphate dehydrogenase, found in Bifidobacterium longum (strain NCC 2705).